The chain runs to 86 residues: Large ribosomal subunit protein eL20 (86 aa).

This sequence belongs to the eukaryotic ribosomal protein eL20 family. In terms of assembly, part of the 50S ribosomal subunit. Binds 23S rRNA.

In Saccharolobus solfataricus (strain ATCC 35092 / DSM 1617 / JCM 11322 / P2) (Sulfolobus solfataricus), this protein is Large ribosomal subunit protein eL20.